The chain runs to 453 residues: Serine protease HTRA3 (453 aa).

Residues 1–17 (MQARALLLAALAALALA) form the signal peptide. Residues 21 to 84 (PAAPCPARCD…ECVRGLCRCR (64 aa)) form the IGFBP N-terminal domain. Cystine bridges form between Cys-25–Cys-48, Cys-29–Cys-50, Cys-34–Cys-51, Cys-39–Cys-54, Cys-62–Cys-76, Cys-70–Cys-81, Cys-83–Cys-101, and Cys-90–Cys-126. Residues 64-128 (GPLDSPCGES…RQLQKGACPL (65 aa)) enclose the Kazal-like domain. Positions 175–340 (GSGFIMSEAG…AIPSDRITRF (166 aa)) are serine protease. Active-site charge relay system residues include His-191, Asp-227, and Ser-305. Residues 359 to 444 (IRMRTITPSL…EVRRGNDDLL (86 aa)) form the PDZ domain.

It belongs to the peptidase S1C family. Homotrimer. Interacts with TGFB1; the interaction inhibits TGFB-mediated signaling. Interacts with BMP4; the interaction inhibits BMP4-mediated signaling. Interacts with TGFB2 and GDF5. Interacts with MYH9. Widely expressed, with highest levels in both adult and fetal heart, ovary, uterus placenta, and bladder. In the endometrium, expressed in epithelial glands and the stroma. Also present in leukocytes. Isoform 1 is predominant in heart and skeletal muscle, whereas isoform 2 is predominant in placenta and kidney.

Its subcellular location is the secreted. Functionally, serine protease that cleaves beta-casein/CSN2 as well as several extracellular matrix (ECM) proteoglycans such as decorin/DCN, biglycan/BGN and fibronectin/FN1. Inhibits signaling mediated by TGF-beta family proteins possibly indirectly by degradation of these ECM proteoglycans. May act as a tumor suppressor. Negatively regulates, in vitro, trophoblast invasion during placental development and may be involved in the development of the placenta in vivo. May also have a role in ovarian development, granulosa cell differentiation and luteinization. In Homo sapiens (Human), this protein is Serine protease HTRA3 (HTRA3).